The sequence spans 175 residues: MGAAESSMFNSLEKNSNFSGPELMRLKKRFMKLDKDGSGSIDKDEFLQIPQIANNPLAHRMIAIFDEDGSGTVDFQEFVGGLSAFSSKGGRDEKLRFAFKVYDMDRDGYISNGELYLVLKQMVGNNLKDQQLQQIVDKTIMEADKDGDGKLSFEEFTQMVASTDIVKQMTLEDLF.

EF-hand domains follow at residues 21–56 (PELM…ANNP), 60–88 (RMIA…FSSK), 90–125 (GRDE…MVGN), and 131–166 (QLQQ…TDIV). 20 residues coordinate Ca(2+): D34, D36, S38, S40, E45, D66, D68, S70, T72, E77, D103, D105, D107, Y109, E114, D144, D146, D148, K150, and E155.

Belongs to the calcineurin regulatory subunit family. In terms of assembly, composed of a catalytic subunit (A) and a regulatory subunit (B).

Its function is as follows. Regulatory subunit of calcineurin, a calcium-dependent, calmodulin stimulated protein phosphatase. Confers calcium sensitivity. Plays a central role in virulence and antifungal drug action. The protein is Calcineurin subunit B (CNB1) of Cryptococcus neoformans var. neoformans serotype D (strain B-3501A) (Filobasidiella neoformans).